Reading from the N-terminus, the 224-residue chain is Small ribosomal subunit protein uS13 (224 aa).

Residues 1–17 (MSEKTDKTEKKQKKAEE) show a composition bias toward basic and acidic residues. 2 disordered regions span residues 1–64 (MSEK…AEEK) and 184–224 (HERG…EDKK). 2 stretches are compositionally biased toward low complexity: residues 20–30 (ETASAEAAPAK) and 38–47 (AKPAEGAPAD). Basic and acidic residues predominate over residues 210-224 (KKGEQGGAAKKEDKK).

This sequence belongs to the universal ribosomal protein uS13 family. In terms of assembly, part of the 30S ribosomal subunit. Forms a loose heterodimer with protein S19. Forms two bridges to the 50S subunit in the 70S ribosome.

Functionally, located at the top of the head of the 30S subunit, it contacts several helices of the 16S rRNA. In the 70S ribosome it contacts the 23S rRNA (bridge B1a) and protein L5 of the 50S subunit (bridge B1b), connecting the 2 subunits; these bridges are implicated in subunit movement. This is Small ribosomal subunit protein uS13 from Methanocella arvoryzae (strain DSM 22066 / NBRC 105507 / MRE50).